A 428-amino-acid polypeptide reads, in one-letter code: 3-phosphoshikimate 1-carboxyvinyltransferase (428 aa).

Lys-23, Ser-24, and Arg-28 together coordinate 3-phosphoshikimate. Phosphoenolpyruvate is bound at residue Lys-23. Positions 97 and 125 each coordinate phosphoenolpyruvate. Residues Ser-170, Ser-171, Gln-172, Ser-198, Asp-314, Asn-337, and Lys-341 each contribute to the 3-phosphoshikimate site. A phosphoenolpyruvate-binding site is contributed by Gln-172. Asp-314 functions as the Proton acceptor in the catalytic mechanism. Residues Arg-345, Arg-387, and Lys-412 each contribute to the phosphoenolpyruvate site.

It belongs to the EPSP synthase family. As to quaternary structure, monomer.

The protein resides in the cytoplasm. The catalysed reaction is 3-phosphoshikimate + phosphoenolpyruvate = 5-O-(1-carboxyvinyl)-3-phosphoshikimate + phosphate. It participates in metabolic intermediate biosynthesis; chorismate biosynthesis; chorismate from D-erythrose 4-phosphate and phosphoenolpyruvate: step 6/7. Catalyzes the transfer of the enolpyruvyl moiety of phosphoenolpyruvate (PEP) to the 5-hydroxyl of shikimate-3-phosphate (S3P) to produce enolpyruvyl shikimate-3-phosphate and inorganic phosphate. The polypeptide is 3-phosphoshikimate 1-carboxyvinyltransferase (Erwinia tasmaniensis (strain DSM 17950 / CFBP 7177 / CIP 109463 / NCPPB 4357 / Et1/99)).